The chain runs to 336 residues: HTH-type transcriptional repressor PurR (336 aa).

The HTH lacI-type domain maps to 2-56 (ATIKDVAKLAGVSTTTVSHVINKTRFVAEDTSKAVWDAIQQLNYSPSAVARSLKV). The segment at residues 4-23 (IKDVAKLAGVSTTTVSHVIN) is a DNA-binding region (H-T-H motif). Residues 48-56 (SAVARSLKV) mediate DNA binding. Residues Tyr73, Lys188, Phe219, and Asp273 each contribute to the hypoxanthine site.

As to quaternary structure, homodimer.

The protein operates within purine metabolism; purine nucleotide biosynthesis [regulation]. Functionally, is the main repressor of the genes involved in the de novo synthesis of purine nucleotides, regulating purB, purC, purEK, purF, purHD, purL, purMN and guaBA expression. PurR is allosterically activated to bind its cognate DNA by binding the purine corepressors, hypoxanthine or guanine, thereby effecting transcription repression. The sequence is that of HTH-type transcriptional repressor PurR from Actinobacillus pleuropneumoniae serotype 3 (strain JL03).